The chain runs to 390 residues: Zinc transporter 7-B (390 aa).

Over 1 to 37 (MLPLSIKDDEYKPPKFNLVRKVSGWIRSIFSDSTSRN) the chain is Cytoplasmic. The chain crosses the membrane as a helical span at residues 38–58 (LFCFLCLNLSFAFVELFYGIW). Residues 59–67 (SNSLGLISD) are Lumenal-facing. A helical membrane pass occupies residues 68–88 (SFHMFFDCTALLAGLAASVIS). At 89 to 102 (RWKTNETFSYGYVR) the chain is on the cytoplasmic side. The chain crosses the membrane as a helical span at residues 103-123 (AEVLAGFVNGLFLIFTAFFIF). Residues 124 to 140 (SEGIERALDTPEVHHER) lie on the Lumenal side of the membrane. Residues 141–161 (LLPVSIMGFLVNLIGIFVFQH) form a helical membrane-spanning segment. A his-rich loop region spans residues 161–226 (HGGGHGHSHE…GHDHSHKHGH (66 aa)). Residues 162–250 (GGGHGHSHES…KGSSKQILEG (89 aa)) are Cytoplasmic-facing. Residues 166–243 (GHSHESGHGH…DEPPEENKGS (78 aa)) are disordered. Positions 187-201 (GHSHSHGGGHGHSHG) are enriched in basic residues. Composition is skewed to basic and acidic residues over residues 202-218 (GGHEHGHSHGGGHEHGH) and 232-242 (CHDEPPEENKG). A helical membrane pass occupies residues 251-271 (VFLHIVADALGSVGVIISTIL). Over 272 to 276 (MQQYG) the chain is Lumenal. A helical membrane pass occupies residues 277 to 297 (LMIADPICSMLIALLIFVSVI). The Cytoplasmic segment spans residues 298-390 (PLLKQSIGIL…LYVQIDLAAM (93 aa)).

The protein belongs to the cation diffusion facilitator (CDF) transporter (TC 2.A.4) family. SLC30A subfamily. As to quaternary structure, homooligomer.

The protein resides in the golgi apparatus membrane. Its subcellular location is the cytoplasmic vesicle. It localises to the golgi apparatus. It is found in the trans-Golgi network. The protein localises to the sarcoplasmic reticulum. The protein resides in the mitochondrion. It catalyses the reaction Zn(2+)(in) = Zn(2+)(out). Functionally, zinc ion transporter mediating zinc entry from the cytosol into the lumen of organelles along the secretory pathway. By contributing to zinc ion homeostasis within the early secretory pathway, regulates the activation and folding of enzymes like alkaline phosphatases. This chain is Zinc transporter 7-B (slc30a7-b), found in Xenopus laevis (African clawed frog).